A 458-amino-acid chain; its full sequence is RuvB-like helicase 1 (458 aa).

The interval 1-29 (MVQISEVKGNSRDNRTAAHTHIKGLGLRP) is disordered. ATP is bound at residue 71–78 (GGPGTGKT).

It belongs to the RuvB family. As to quaternary structure, may form heterododecamers with RVB2. Component of the SWR1 chromatin remodeling complex, the INO80 chromatin remodeling complex, and of the R2TP complex.

Its subcellular location is the nucleus. It carries out the reaction ATP + H2O = ADP + phosphate + H(+). DNA helicase which participates in several chromatin remodeling complexes, including the SWR1 and the INO80 complexes. The SWR1 complex mediates the ATP-dependent exchange of histone H2A for the H2A variant HZT1 leading to transcriptional regulation of selected genes by chromatin remodeling. The INO80 complex remodels chromatin by shifting nucleosomes and is involved in DNA repair. Also involved in pre-rRNA processing. This Emericella nidulans (strain FGSC A4 / ATCC 38163 / CBS 112.46 / NRRL 194 / M139) (Aspergillus nidulans) protein is RuvB-like helicase 1 (rvb1).